The following is a 237-amino-acid chain: Ribonuclease PH (237 aa).

Phosphate is bound by residues arginine 86 and 124–126 (GTR).

The protein belongs to the RNase PH family. Homohexameric ring arranged as a trimer of dimers.

The enzyme catalyses tRNA(n+1) + phosphate = tRNA(n) + a ribonucleoside 5'-diphosphate. Its function is as follows. Phosphorolytic 3'-5' exoribonuclease that plays an important role in tRNA 3'-end maturation. Removes nucleotide residues following the 3'-CCA terminus of tRNAs; can also add nucleotides to the ends of RNA molecules by using nucleoside diphosphates as substrates, but this may not be physiologically important. Probably plays a role in initiation of 16S rRNA degradation (leading to ribosome degradation) during starvation. The polypeptide is Ribonuclease PH (Roseobacter denitrificans (strain ATCC 33942 / OCh 114) (Erythrobacter sp. (strain OCh 114))).